The sequence spans 273 residues: Dermonecrotic toxin LsaSicTox-alphaIB1bi (273 aa).

Residue His-5 is part of the active site. The Mg(2+) site is built by Glu-25 and Asp-27. Catalysis depends on His-41, which acts as the Nucleophile. 2 cysteine pairs are disulfide-bonded: Cys-45/Cys-51 and Cys-47/Cys-190. Mg(2+) is bound at residue Asp-85.

It belongs to the arthropod phospholipase D family. Class II subfamily. Mg(2+) serves as cofactor. As to expression, expressed by the venom gland.

It is found in the secreted. The enzyme catalyses an N-(acyl)-sphingosylphosphocholine = an N-(acyl)-sphingosyl-1,3-cyclic phosphate + choline. The catalysed reaction is an N-(acyl)-sphingosylphosphoethanolamine = an N-(acyl)-sphingosyl-1,3-cyclic phosphate + ethanolamine. It catalyses the reaction a 1-acyl-sn-glycero-3-phosphocholine = a 1-acyl-sn-glycero-2,3-cyclic phosphate + choline. It carries out the reaction a 1-acyl-sn-glycero-3-phosphoethanolamine = a 1-acyl-sn-glycero-2,3-cyclic phosphate + ethanolamine. Its function is as follows. Dermonecrotic toxins cleave the phosphodiester linkage between the phosphate and headgroup of certain phospholipids (sphingolipid and lysolipid substrates), forming an alcohol (often choline) and a cyclic phosphate. This toxin acts on sphingomyelin (SM). It may also act on ceramide phosphoethanolamine (CPE), lysophosphatidylcholine (LPC) and lysophosphatidylethanolamine (LPE), but not on lysophosphatidylserine (LPS), and lysophosphatidylglycerol (LPG). It acts by transphosphatidylation, releasing exclusively cyclic phosphate products as second products. Induces dermonecrosis, hemolysis, increased vascular permeability, edema, inflammatory response, and platelet aggregation. The protein is Dermonecrotic toxin LsaSicTox-alphaIB1bi of Loxosceles sabina (Tucson recluse spider).